The sequence spans 238 residues: LexA repressor (238 aa).

The H-T-H motif DNA-binding region spans F26–S46. Catalysis depends on for autocatalytic cleavage activity residues S159 and K197.

The protein belongs to the peptidase S24 family. In terms of assembly, homodimer.

It catalyses the reaction Hydrolysis of Ala-|-Gly bond in repressor LexA.. Represses a number of genes involved in the response to DNA damage (SOS response), including recA and lexA. In the presence of single-stranded DNA, RecA interacts with LexA causing an autocatalytic cleavage which disrupts the DNA-binding part of LexA, leading to derepression of the SOS regulon and eventually DNA repair. This is LexA repressor from Gluconobacter oxydans (strain 621H) (Gluconobacter suboxydans).